The sequence spans 428 residues: Serine--tRNA ligase (428 aa).

235–237 lines the L-serine pocket; sequence TAE. 266 to 268 contacts ATP; that stretch reads RSE. Residue Glu289 coordinates L-serine. Position 353-356 (353-356) interacts with ATP; sequence EISS. L-serine is bound at residue Ser389.

This sequence belongs to the class-II aminoacyl-tRNA synthetase family. Type-1 seryl-tRNA synthetase subfamily. In terms of assembly, homodimer. The tRNA molecule binds across the dimer.

The protein localises to the cytoplasm. The enzyme catalyses tRNA(Ser) + L-serine + ATP = L-seryl-tRNA(Ser) + AMP + diphosphate + H(+). It catalyses the reaction tRNA(Sec) + L-serine + ATP = L-seryl-tRNA(Sec) + AMP + diphosphate + H(+). It participates in aminoacyl-tRNA biosynthesis; selenocysteinyl-tRNA(Sec) biosynthesis; L-seryl-tRNA(Sec) from L-serine and tRNA(Sec): step 1/1. Catalyzes the attachment of serine to tRNA(Ser). Is also able to aminoacylate tRNA(Sec) with serine, to form the misacylated tRNA L-seryl-tRNA(Sec), which will be further converted into selenocysteinyl-tRNA(Sec). This Shewanella halifaxensis (strain HAW-EB4) protein is Serine--tRNA ligase.